The sequence spans 356 residues: Phospho-N-acetylmuramoyl-pentapeptide-transferase (356 aa).

The next 10 helical transmembrane spans lie at 25–45 (TVAAMLTSGLIVFLFGPSIIA), 70–90 (GTPTMGGLMILTGIVVSAFLW), 93–113 (LSNIYFWVSLFVMLSFGMIGF), 138–158 (FLIAIIAAFVLLQVGSSGLAL), 164–184 (YFINLSWFFLPFSAFVIVGTG), 195–215 (GLAIVPVMVAALSFALIAYLS), 235–255 (LAVLLGAVVGAGLGFLWFNAP), 258–278 (AIFMGDTGSLALGGLLGIVAV), 284–304 (IVLALIGGLFVLEGFSVVIQV), and 333–353 (QVVIRFWIISIVLALVGLSTL).

This sequence belongs to the glycosyltransferase 4 family. MraY subfamily. Mg(2+) is required as a cofactor.

The protein localises to the cell inner membrane. It catalyses the reaction UDP-N-acetyl-alpha-D-muramoyl-L-alanyl-gamma-D-glutamyl-meso-2,6-diaminopimeloyl-D-alanyl-D-alanine + di-trans,octa-cis-undecaprenyl phosphate = di-trans,octa-cis-undecaprenyl diphospho-N-acetyl-alpha-D-muramoyl-L-alanyl-D-glutamyl-meso-2,6-diaminopimeloyl-D-alanyl-D-alanine + UMP. The protein operates within cell wall biogenesis; peptidoglycan biosynthesis. Catalyzes the initial step of the lipid cycle reactions in the biosynthesis of the cell wall peptidoglycan: transfers peptidoglycan precursor phospho-MurNAc-pentapeptide from UDP-MurNAc-pentapeptide onto the lipid carrier undecaprenyl phosphate, yielding undecaprenyl-pyrophosphoryl-MurNAc-pentapeptide, known as lipid I. This is Phospho-N-acetylmuramoyl-pentapeptide-transferase from Bartonella quintana (strain Toulouse) (Rochalimaea quintana).